Reading from the N-terminus, the 134-residue chain is Putative pre-16S rRNA nuclease (134 aa).

This sequence belongs to the YqgF nuclease family.

It is found in the cytoplasm. Its function is as follows. Could be a nuclease involved in processing of the 5'-end of pre-16S rRNA. In Helicobacter pylori (strain ATCC 700392 / 26695) (Campylobacter pylori), this protein is Putative pre-16S rRNA nuclease.